The chain runs to 169 residues: Large ribosomal subunit protein uL10 (169 aa).

The protein belongs to the universal ribosomal protein uL10 family. In terms of assembly, part of the ribosomal stalk of the 50S ribosomal subunit. The N-terminus interacts with L11 and the large rRNA to form the base of the stalk. The C-terminus forms an elongated spine to which L12 dimers bind in a sequential fashion forming a multimeric L10(L12)X complex.

Functionally, forms part of the ribosomal stalk, playing a central role in the interaction of the ribosome with GTP-bound translation factors. The sequence is that of Large ribosomal subunit protein uL10 from Rickettsia typhi (strain ATCC VR-144 / Wilmington).